We begin with the raw amino-acid sequence, 187 residues long: Peptide deformylase (187 aa).

Positions 94 and 136 each coordinate Fe cation. Residue Glu-137 is part of the active site. His-140 is a binding site for Fe cation.

It belongs to the polypeptide deformylase family. Requires Fe(2+) as cofactor.

It carries out the reaction N-terminal N-formyl-L-methionyl-[peptide] + H2O = N-terminal L-methionyl-[peptide] + formate. In terms of biological role, removes the formyl group from the N-terminal Met of newly synthesized proteins. Requires at least a dipeptide for an efficient rate of reaction. N-terminal L-methionine is a prerequisite for activity but the enzyme has broad specificity at other positions. The polypeptide is Peptide deformylase (Chlorobaculum parvum (strain DSM 263 / NCIMB 8327) (Chlorobium vibrioforme subsp. thiosulfatophilum)).